The chain runs to 119 residues: Large ribosomal subunit protein bL20 (119 aa).

Belongs to the bacterial ribosomal protein bL20 family.

Functionally, binds directly to 23S ribosomal RNA and is necessary for the in vitro assembly process of the 50S ribosomal subunit. It is not involved in the protein synthesizing functions of that subunit. This chain is Large ribosomal subunit protein bL20, found in Bordetella petrii (strain ATCC BAA-461 / DSM 12804 / CCUG 43448).